The sequence spans 563 residues: CTP synthase (563 aa).

Positions 1–280 (MTKFVFVTGG…DEMICMKLQL (280 aa)) are amidoligase domain. Position 13 (S13) interacts with CTP. S13 is a UTP binding site. Residues 14 to 19 (SLGKGI) and D71 each bind ATP. 2 residues coordinate Mg(2+): D71 and E154. CTP contacts are provided by residues 161–163 (DIE), 201–206 (KTKPTQ), and K237. UTP is bound by residues 201-206 (KTKPTQ) and K237. The 253-residue stretch at 305–557 (TIAMAGKYTE…IAAALEHHAA (253 aa)) folds into the Glutamine amidotransferase type-1 domain. L-glutamine is bound at residue G366. C393 functions as the Nucleophile; for glutamine hydrolysis in the catalytic mechanism. Residues 394–397 (LGMQ), E417, and R483 contribute to the L-glutamine site. Active-site residues include H530 and E532.

The protein belongs to the CTP synthase family. As to quaternary structure, homotetramer.

The catalysed reaction is UTP + L-glutamine + ATP + H2O = CTP + L-glutamate + ADP + phosphate + 2 H(+). It catalyses the reaction L-glutamine + H2O = L-glutamate + NH4(+). It carries out the reaction UTP + NH4(+) + ATP = CTP + ADP + phosphate + 2 H(+). Its pathway is pyrimidine metabolism; CTP biosynthesis via de novo pathway; CTP from UDP: step 2/2. Allosterically activated by GTP, when glutamine is the substrate; GTP has no effect on the reaction when ammonia is the substrate. The allosteric effector GTP functions by stabilizing the protein conformation that binds the tetrahedral intermediate(s) formed during glutamine hydrolysis. Inhibited by the product CTP, via allosteric rather than competitive inhibition. Functionally, catalyzes the ATP-dependent amination of UTP to CTP with either L-glutamine or ammonia as the source of nitrogen. Regulates intracellular CTP levels through interactions with the four ribonucleotide triphosphates. This Leptothrix cholodnii (strain ATCC 51168 / LMG 8142 / SP-6) (Leptothrix discophora (strain SP-6)) protein is CTP synthase.